We begin with the raw amino-acid sequence, 491 residues long: MATQWEVVIGLETHAQLSTVSKIFSGASTQFGAEPNTQACPVDLALPGVLPVLNRGAVERAIRFGLAIGSTIAPRSIFARKNYFYPDLPKGYQISQYEIPVVQGGQITIQVPANEKAGKDAYEKTVNLTRAHLEEDAGKSLHEDFAGMTGIDLNRAGTPLLEIVTEPEMRSAAEAVAYAKALHGLVVWLGICDGNMQEGSFRCDANVSVRPIGQEKFGTRAEIKNLNSFRFLEEAINFEVRRQIELIEDGGEVVQETRLYDPDKRETRSMRSKEDAHDYRYFPDPDLMPLVIGQDWIERVQSGMPELPAAMQQRFADEYGVSAYDAGVLTSSKAMAAYFEAVVAKAGTANAKIAANWLMGDVSSQLNRDGIEIDAIPVSAAQLALVLQRIADGTISNKIAKEIFTTIWDEKADDEGAADRIIDAKGLKQISDTGALEAIIDEVLAANAKSVEEFRAGKEKAFNALIGQAMKATKGKANPQQVNELLKKKLG.

This sequence belongs to the GatB/GatE family. GatB subfamily. Heterotrimer of A, B and C subunits.

The catalysed reaction is L-glutamyl-tRNA(Gln) + L-glutamine + ATP + H2O = L-glutaminyl-tRNA(Gln) + L-glutamate + ADP + phosphate + H(+). It catalyses the reaction L-aspartyl-tRNA(Asn) + L-glutamine + ATP + H2O = L-asparaginyl-tRNA(Asn) + L-glutamate + ADP + phosphate + 2 H(+). In terms of biological role, allows the formation of correctly charged Asn-tRNA(Asn) or Gln-tRNA(Gln) through the transamidation of misacylated Asp-tRNA(Asn) or Glu-tRNA(Gln) in organisms which lack either or both of asparaginyl-tRNA or glutaminyl-tRNA synthetases. The reaction takes place in the presence of glutamine and ATP through an activated phospho-Asp-tRNA(Asn) or phospho-Glu-tRNA(Gln). This Burkholderia lata (strain ATCC 17760 / DSM 23089 / LMG 22485 / NCIMB 9086 / R18194 / 383) protein is Aspartyl/glutamyl-tRNA(Asn/Gln) amidotransferase subunit B.